Here is a 389-residue protein sequence, read N- to C-terminus: Endo-chitosanase C (389 aa).

The N-terminal stretch at Met-1 to Gly-22 is a signal peptide. An R3-1 repeat occupies Cys-280–Cys-313. An R3-2 repeat occupies Glu-320–Cys-350. One copy of the R3-3 repeat lies at Glu-357–Cys-387.

This sequence belongs to the glycosyl hydrolase 75 family.

It is found in the secreted. The enzyme catalyses Endohydrolysis of beta-(1-&gt;4)-linkages between D-glucosamine residues in a partly acetylated chitosan.. In terms of biological role, chitosanase catalyzing the endo-type cleavage of chitosan, the deacylated form of chitin. Chitosanase may be crucial in the degradation of the deacetylated portion of chitin in the fungal cell wall. Chitoolisaccharides produced by the hydrolysis of partially N-acetylated chitosan are known to have many biological activities, including antibacterial activity, immune-enhancing effects, and elicitor activity. The sequence is that of Endo-chitosanase C (csnC) from Aspergillus oryzae (strain ATCC 42149 / RIB 40) (Yellow koji mold).